Reading from the N-terminus, the 255-residue chain is EEF1A lysine methyltransferase 4 (255 aa).

S-adenosyl-L-methionine-binding residues include W26 and Y30. Y39 is modified (phosphotyrosine). Residues W41, G66, 88 to 89 (DY), 113 to 114 (DV), and K130 contribute to the S-adenosyl-L-methionine site. Residues 129–134 (EKGTLD) carry the Required for methyltransferase activity motif.

Belongs to the methyltransferase superfamily.

It carries out the reaction L-lysyl-[protein] + S-adenosyl-L-methionine = N(6)-methyl-L-lysyl-[protein] + S-adenosyl-L-homocysteine + H(+). It catalyses the reaction N(6)-methyl-L-lysyl-[protein] + S-adenosyl-L-methionine = N(6),N(6)-dimethyl-L-lysyl-[protein] + S-adenosyl-L-homocysteine + H(+). The enzyme catalyses N(6),N(6)-dimethyl-L-lysyl-[protein] + S-adenosyl-L-methionine = N(6),N(6),N(6)-trimethyl-L-lysyl-[protein] + S-adenosyl-L-homocysteine + H(+). Protein-lysine methyltransferase that efficiently catalyzes three successive methylations on 'Lys-36' in eukaryotic translation elongation factor 1 alpha (EEF1A1 or EEF1A2). In Bos taurus (Bovine), this protein is EEF1A lysine methyltransferase 4.